Here is a 234-residue protein sequence, read N- to C-terminus: MKLTWLGHSAFRLENGSAKILIDPFFTGNPGFAGQDGKSAAEGITHILLTHGHGDHVGDTVQLARETGATVLANADLAAWLSAKGVAKVDMGNTGGTVHFDGFSVTFTNALHSSAQITEDGVSHSLGNANGLMLHFEDGPAVYHMGDTDIFSDMKLINELHQPDIGLVPIGDRFTMGGAVAALACQRFFKFQNVIPCHYGSFPIIDQTPDKFVAGMEGAEARVHTPKAGDTLSF.

The protein belongs to the UPF0173 family.

The chain is UPF0173 metal-dependent hydrolase Atu1317 from Agrobacterium fabrum (strain C58 / ATCC 33970) (Agrobacterium tumefaciens (strain C58)).